The sequence spans 362 residues: MPRIETEVRLDFKDVLIRPKRSTLKSRSQVDVQREFRFLNSKRTWSGVPVIAANMDTVGTFEMAVELAKLEFITCVHKHYTPQDWATFAAKHPDVLPTVAVSGGSSAADVEKITAILKSHPDIRFICLDVANGYSEVFVQAVRNVRSAFPEHTIIAGNVVTGEMVEELLLSGADIIKVGIGPGSVCTTRKQTGVGYPQLSAVLECADAAHGLNGHVISDGGCTCPGDVAKAFGAGADFVMLGGMLAGHDESGGDKIEINGKLLKKFYGMSSSEAMKKHNGGVAEYRASEGKSVTVPYRGPVSGTCKEILGGVRSTCTYVGASKLKEISKRTTFIRVSQQLNEVFGRAPNEQEEQVSKKQKTG.

NADP(+) is bound by residues 26–27, K78, 129–131, and 180–181; these read SR, DVA, and IG. Positions 181, 183, and 186 each coordinate K(+). C186 serves as the catalytic Thioimidate intermediate. T188 functions as the Proton donor/acceptor in the catalytic mechanism. Residue R189 participates in K(+) binding. GMP is bound by residues 219–221, 242–243, 268–270, and 286–290; these read DGG, GG, GMS, and RASEG. Residues M269, 285-286, and 314-317 contribute to the NADP(+) site; these read YR and STCT.

The protein belongs to the IMPDH/GMPR family.

The enzyme catalyses IMP + NH4(+) + NADP(+) = GMP + NADPH + 2 H(+). Catalyzes the irreversible NADPH-dependent deamination of GMP to IMP. It functions in the conversion of nucleobase, nucleoside and nucleotide derivatives of G to A nucleotides, and in maintaining the intracellular balance of A and G nucleotides. This is GMP reductase from Phytophthora infestans (Potato late blight agent).